Reading from the N-terminus, the 125-residue chain is Holo-[acyl-carrier-protein] synthase (125 aa).

Mg(2+)-binding residues include Asp8 and Glu57.

It belongs to the P-Pant transferase superfamily. AcpS family. It depends on Mg(2+) as a cofactor.

It localises to the cytoplasm. The catalysed reaction is apo-[ACP] + CoA = holo-[ACP] + adenosine 3',5'-bisphosphate + H(+). Transfers the 4'-phosphopantetheine moiety from coenzyme A to a Ser of acyl-carrier-protein. In Blochmanniella pennsylvanica (strain BPEN), this protein is Holo-[acyl-carrier-protein] synthase.